The primary structure comprises 202 residues: Recoverin (202 aa).

Gly2 carries the N-myristoyl glycine lipid modification. Cys39 carries the cysteine sulfenic acid (-SOH) modification. EF-hand domains are found at residues 41 to 59 (SGRI…FFPE), 61 to 96 (DPKA…TSAG), 97 to 132 (KTNQ…IFKM), and 147 to 182 (TPEK…NKEI). Residues Asp74, Asn76, Asp78, Thr80, Glu85, Asp110, Asp112, Asn114, and Glu121 each contribute to the Ca(2+) site. Residues 189–192 (EPRK) are interaction with GRK1.

The protein belongs to the recoverin family. Homodimer; disulfide-linked. Homodimerization is caused by prolonged intense illumination. May form a complex composed of RHO, GRK1 and RCVRN in a Ca(2+)-dependent manner; RCVRN prevents the interaction between GRK1 and RHO. Interacts (via C-terminus) with GRK1 (via N-terminus); the interaction is Ca(2+)-dependent. In terms of processing, the N-terminal glycine is linked to one of four different types of acyl groups. The most abundant is myristoleate (14:1), but 14:0, 14:2, and 12:0 acyl residues are also present. The Ca(2+) induced exposure of the myristoyl group, known as the calcium-myristoyl switch, promotes RCVRN binding to the photoreceptor cell membranes only when intracellular Ca(2+) concentration is high. Oxidation on Cys-39 occurs in response to prolonged intense illumination and results in the formation of disulfide homodimers, and to a lesser extent disulfide-linked heterodimers.

The protein localises to the photoreceptor inner segment. Its subcellular location is the cell projection. It is found in the cilium. It localises to the photoreceptor outer segment. The protein resides in the photoreceptor outer segment membrane. The protein localises to the perikaryon. Acts as a calcium sensor and regulates phototransduction of cone and rod photoreceptor cells. Modulates light sensitivity of cone photoreceptor in dark and dim conditions. In response to high Ca(2+) levels induced by low light levels, prolongs RHO/rhodopsin activation in rod photoreceptor cells by binding to and inhibiting GRK1-mediated phosphorylation of RHO/rhodopsin. Plays a role in scotopic vision/enhances vision in dim light by enhancing signal transfer between rod photoreceptors and rod bipolar cells. Improves rod photoreceptor sensitivity in dim light and mediates response of rod photoreceptors to facilitate detection of change and motion in bright light. The sequence is that of Recoverin (RCVRN) from Canis lupus familiaris (Dog).